A 346-amino-acid chain; its full sequence is NADH-cytochrome b5 reductase 2 (346 aa).

A helical membrane pass occupies residues 28–50 (GGSNAALYAGLAAAAGAGAYYFL). Residues 95 to 200 (QGFISLKLDS…KGPIPKYPWS (106 aa)) enclose the FAD-binding FR-type domain. Residue 203–238 (KHDHIALIAGGTGITPMYQLARAIFNNPADKTKVTL) participates in FAD binding.

Belongs to the flavoprotein pyridine nucleotide cytochrome reductase family. Requires FAD as cofactor.

The protein resides in the mitochondrion outer membrane. It carries out the reaction 2 Fe(III)-[cytochrome b5] + NADH = 2 Fe(II)-[cytochrome b5] + NAD(+) + H(+). Functionally, may mediate the reduction of outer membrane cytochrome b5. The polypeptide is NADH-cytochrome b5 reductase 2 (mcr1) (Botryotinia fuckeliana (strain B05.10) (Noble rot fungus)).